We begin with the raw amino-acid sequence, 311 residues long: Probable manganese-dependent inorganic pyrophosphatase (311 aa).

Residues H9, D13, D15, D77, H99, and D151 each coordinate Mn(2+).

This sequence belongs to the PPase class C family. It depends on Mn(2+) as a cofactor.

The protein resides in the cytoplasm. The enzyme catalyses diphosphate + H2O = 2 phosphate + H(+). This is Probable manganese-dependent inorganic pyrophosphatase from Streptococcus agalactiae serotype III (strain NEM316).